The primary structure comprises 336 residues: Protein-lysine N-methyltransferase EFM3 (336 aa).

S-adenosyl-L-methionine contacts are provided by residues tryptophan 147, 173 to 175 (GTG), aspartate 196, leucine 232, and alanine 251.

This sequence belongs to the class I-like SAM-binding methyltransferase superfamily. EEF2KMT family.

The protein resides in the cytoplasm. In terms of biological role, S-adenosyl-L-methionine-dependent protein-lysine N-methyltransferase that methylates elongation factor 2. The polypeptide is Protein-lysine N-methyltransferase EFM3 (Chaetomium thermophilum (strain DSM 1495 / CBS 144.50 / IMI 039719) (Thermochaetoides thermophila)).